A 419-amino-acid polypeptide reads, in one-letter code: Glutamyl-tRNA reductase (419 aa).

Substrate contacts are provided by residues 49 to 52 (TCNR), Ser-107, 112 to 114 (EPQ), and Gln-118. Cys-50 acts as the Nucleophile in catalysis. 187 to 192 (GAGETI) provides a ligand contact to NADP(+).

It belongs to the glutamyl-tRNA reductase family. Homodimer.

The catalysed reaction is (S)-4-amino-5-oxopentanoate + tRNA(Glu) + NADP(+) = L-glutamyl-tRNA(Glu) + NADPH + H(+). It participates in porphyrin-containing compound metabolism; protoporphyrin-IX biosynthesis; 5-aminolevulinate from L-glutamyl-tRNA(Glu): step 1/2. Functionally, catalyzes the NADPH-dependent reduction of glutamyl-tRNA(Glu) to glutamate 1-semialdehyde (GSA). This is Glutamyl-tRNA reductase from Vibrio vulnificus (strain CMCP6).